The following is a 113-amino-acid chain: Hydrogenase maturation factor HypA (113 aa).

A Ni(2+)-binding site is contributed by histidine 2. Residues cysteine 73, cysteine 76, cysteine 89, and cysteine 92 each contribute to the Zn(2+) site.

Belongs to the HypA/HybF family.

Its function is as follows. Involved in the maturation of [NiFe] hydrogenases. Required for nickel insertion into the metal center of the hydrogenase. The sequence is that of Hydrogenase maturation factor HypA from Albidiferax ferrireducens (strain ATCC BAA-621 / DSM 15236 / T118) (Rhodoferax ferrireducens).